Here is a 292-residue protein sequence, read N- to C-terminus: Short chain dehydrogenases/reductase notP' (292 aa).

The segment at 1–25 is disordered; the sequence is MPQTSDGNVHAPQYREAKPSQGDPS. L48, D97, K158, Y193, K197, I230, and T232 together coordinate NADP(+). Y193 serves as the catalytic Proton donor. Residue K197 is the Lowers pKa of active site Tyr of the active site.

The protein belongs to the short-chain dehydrogenases/reductases (SDR) family.

Functionally, short chain dehydrogenases/reductase; part of the gene cluster that mediates the biosynthesis of notoamide, a fungal indole alkaloid that belongs to a family of natural products containing a characteristic bicyclo[2.2.2]diazaoctane core. The first step of notoamide biosynthesis involves coupling of L-proline and L-tryptophan by the bimodular NRPS notE', to produce cyclo-L-tryptophan-L-proline called brevianamide F. The reverse prenyltransferase notF' then acts as a deoxybrevianamide E synthase and converts brevianamide F to deoxybrevianamide E via reverse prenylation at C-2 of the indole ring leading to the bicyclo[2.2.2]diazaoctane core. Deoxybrevianamide E is further hydroxylated at C-6 of the indole ring, likely catalyzed by the cytochrome P450 monooxygenase notG', to yield 6-hydroxy-deoxybrevianamide E. 6-hydroxy-deoxybrevianamide E is a specific substrate of the prenyltransferase notC' for normal prenylation at C-7 to produce 6-hydroxy-7-prenyl-deoxybrevianamide, also called notoamide S. As the proposed pivotal branching point in notoamide biosynthesis, notoamide S can be diverted to notoamide E through an oxidative pyran ring closure putatively catalyzed by either notH' cytochrome P450 monooxygenase or the notD' FAD-linked oxidoreductase. This step would be followed by an indole 2,3-epoxidation-initiated pinacol-like rearrangement catalyzed by the notB' FAD-dependent monooxygenase leading to the formation of notoamide C and notoamide D. On the other hand notoamide S is converted to notoamide T by notH' (or notD'), a bifunctional oxidase that also functions as the intramolecular Diels-Alderase responsible for generation of (-)-notoamide T. To generate antipodal (+)-notoaminide T, notH (or notD) in Aspergillus strain MF297-2 is expected to catalyze a Diels-Alder reaction leading to the opposite stereochemistry. The remaining oxidoreductase notD' (or notH') likely catalyzes the oxidative pyran ring formation to yield (-)-stephacidin A. The FAD-dependent monooxygenase notI' is highly similar to notB' and is predicted to catalyze a similar conversion from (-)-stephacidin A to (+)-notoamide B via the 2,3-epoxidation of (-)-stephacidin A followed by a pinacol-type rearrangement. Finally, it remains unclear which enzyme could be responsible for the final hydroxylation steps leading to notoamide A and sclerotiamide. The function of notP' in the notoamide biosynthesis has not been determined yet. The chain is Short chain dehydrogenases/reductase notP' from Aspergillus versicolor.